We begin with the raw amino-acid sequence, 439 residues long: AP-2 complex subunit mu (439 aa).

An MHD domain is found at 172–438 (RNELYIDVVE…LTKAGTYQNR (267 aa)).

Belongs to the adaptor complexes medium subunit family. Adaptor protein complex 2 (AP-2) is a heterotetramer composed of two large adaptins (alpha-type and beta-type subunits), a medium adaptin (mu-type subunit AP50) and a small adaptin (sigma-type subunit AP17). In terms of processing, phosphorylated.

It is found in the cell membrane. The protein localises to the membrane. Its subcellular location is the coated pit. In terms of biological role, component of the adaptor complexes which link clathrin to receptors in coated vesicles. Clathrin-associated protein complexes are believed to interact with the cytoplasmic tails of membrane proteins, leading to their selection and concentration. AP50 is a subunit of the plasma membrane adaptor. This Dictyostelium discoideum (Social amoeba) protein is AP-2 complex subunit mu (apm2).